Reading from the N-terminus, the 93-residue chain is ATP-dependent Clp protease adapter protein ClpS (93 aa).

This sequence belongs to the ClpS family. Binds to the N-terminal domain of the chaperone ClpA.

Involved in the modulation of the specificity of the ClpAP-mediated ATP-dependent protein degradation. The protein is ATP-dependent Clp protease adapter protein ClpS of Gloeobacter violaceus (strain ATCC 29082 / PCC 7421).